A 652-amino-acid chain; its full sequence is DNA ligase (652 aa).

Residues 29-33 (DSEYD), 78-79 (SL), and E107 each bind NAD(+). K109 acts as the N6-AMP-lysine intermediate in catalysis. NAD(+) is bound by residues R130, E164, K278, and K302. The Zn(2+) site is built by C395, C398, C413, and C418. One can recognise a BRCT domain in the interval 577-652 (AADAVLSGKT…IQDEAWLEQL (76 aa)).

Belongs to the NAD-dependent DNA ligase family. LigA subfamily. The cofactor is Mg(2+). Mn(2+) serves as cofactor.

It catalyses the reaction NAD(+) + (deoxyribonucleotide)n-3'-hydroxyl + 5'-phospho-(deoxyribonucleotide)m = (deoxyribonucleotide)n+m + AMP + beta-nicotinamide D-nucleotide.. Its function is as follows. DNA ligase that catalyzes the formation of phosphodiester linkages between 5'-phosphoryl and 3'-hydroxyl groups in double-stranded DNA using NAD as a coenzyme and as the energy source for the reaction. It is essential for DNA replication and repair of damaged DNA. The sequence is that of DNA ligase from Streptococcus gordonii (strain Challis / ATCC 35105 / BCRC 15272 / CH1 / DL1 / V288).